The primary structure comprises 148 residues: 3-dehydroquinate dehydratase 2 (148 aa).

The Proton acceptor role is filled by Tyr-24. Residues Asn-75, His-81, and Asp-88 each coordinate substrate. The active-site Proton donor is His-101. Residues Leu-102 to Ser-103 and Arg-112 contribute to the substrate site.

It belongs to the type-II 3-dehydroquinase family. Homododecamer.

It carries out the reaction 3-dehydroquinate = 3-dehydroshikimate + H2O. It participates in metabolic intermediate biosynthesis; chorismate biosynthesis; chorismate from D-erythrose 4-phosphate and phosphoenolpyruvate: step 3/7. In terms of biological role, catalyzes a trans-dehydration via an enolate intermediate. The protein is 3-dehydroquinate dehydratase 2 (aroQ2) of Pseudomonas aeruginosa (strain ATCC 15692 / DSM 22644 / CIP 104116 / JCM 14847 / LMG 12228 / 1C / PRS 101 / PAO1).